Consider the following 86-residue polypeptide: Neurotoxin 8-related gene product 1/2/3 (86 aa).

Positions 1 to 19 are cleaved as a signal peptide; the sequence is MNYLTMISLALLVMTGVES. An LCN-type CS-alpha/beta domain is found at 22 to 84; it reads RDAYIADNKN…VPIKVPGKCN (63 aa). Cystine bridges form between Cys-32–Cys-83, Cys-36–Cys-56, Cys-42–Cys-66, and Cys-46–Cys-68. At Asn-84 the chain carries Asparagine amide.

It belongs to the long (4 C-C) scorpion toxin superfamily. Sodium channel inhibitor family. Alpha subfamily. As to expression, expressed by the venom gland.

Its subcellular location is the secreted. In terms of biological role, binds voltage-dependently at site-3 of sodium channels (Nav) and inhibits the inactivation of the activated channels, thereby blocking neuronal transmission. The sequence is that of Neurotoxin 8-related gene product 1/2/3 (NTVIIIrgp1) from Androctonus mauritanicus mauritanicus (Scorpion).